Here is a 288-residue protein sequence, read N- to C-terminus: Acetyl-coenzyme A carboxylase carboxyl transferase subunit beta (288 aa).

The CoA carboxyltransferase N-terminal domain maps to 34-288 (LFAKCPACKH…HLVAFHGGGQ (255 aa)). 4 residues coordinate Zn(2+): Cys-38, Cys-41, Cys-56, and Cys-59. The segment at 38 to 59 (CPACKHMIYKKDLGLAKICPTC) adopts a C4-type zinc-finger fold.

It belongs to the AccD/PCCB family. As to quaternary structure, acetyl-CoA carboxylase is a heterohexamer composed of biotin carboxyl carrier protein (AccB), biotin carboxylase (AccC) and two subunits each of ACCase subunit alpha (AccA) and ACCase subunit beta (AccD). It depends on Zn(2+) as a cofactor.

It localises to the cytoplasm. It catalyses the reaction N(6)-carboxybiotinyl-L-lysyl-[protein] + acetyl-CoA = N(6)-biotinyl-L-lysyl-[protein] + malonyl-CoA. Its pathway is lipid metabolism; malonyl-CoA biosynthesis; malonyl-CoA from acetyl-CoA: step 1/1. In terms of biological role, component of the acetyl coenzyme A carboxylase (ACC) complex. Biotin carboxylase (BC) catalyzes the carboxylation of biotin on its carrier protein (BCCP) and then the CO(2) group is transferred by the transcarboxylase to acetyl-CoA to form malonyl-CoA. This chain is Acetyl-coenzyme A carboxylase carboxyl transferase subunit beta, found in Streptococcus pyogenes serotype M6 (strain ATCC BAA-946 / MGAS10394).